The sequence spans 203 residues: Small ribosomal subunit protein uS4 (203 aa).

An S4 RNA-binding domain is found at 93–156; it reads QRLDNVVYRL…MKVPAILEAV (64 aa).

It belongs to the universal ribosomal protein uS4 family. Part of the 30S ribosomal subunit. Contacts protein S5. The interaction surface between S4 and S5 is involved in control of translational fidelity.

Its function is as follows. One of the primary rRNA binding proteins, it binds directly to 16S rRNA where it nucleates assembly of the body of the 30S subunit. With S5 and S12 plays an important role in translational accuracy. The sequence is that of Small ribosomal subunit protein uS4 from Lactococcus lactis subsp. cremoris (strain MG1363).